The primary structure comprises 1818 residues: Protein encore (1818 aa).

3 disordered regions span residues Ala47–Gly68, Ser123–Asn282, and Ala317–Ser413. The segment covering Val52–Val66 has biased composition (gly residues). Positions Ala124–Gly137 are enriched in polar residues. Residues Gly141–His152 show a composition bias toward basic residues. 4 stretches are compositionally biased toward low complexity: residues Glu156 to Gly179, Asn186 to Ala199, Gln217 to Val233, and Asn266 to Asn282. Phosphoserine occurs at positions 267 and 270. Positions Ala317–Met328 are enriched in basic and acidic residues. Phosphoserine is present on Ser336. The span at Asn338–Pro348 shows a compositional bias: basic and acidic residues. 2 stretches are compositionally biased toward low complexity: residues Asn372–Ile381 and Asn391–Gly410. One can recognise an R3H domain in the interval Arg444–Asn508. Residues Arg510–Gly576 enclose the SUZ domain. Ser535 carries the post-translational modification Phosphoserine. Residues Phe557–Arg568 show a composition bias toward basic and acidic residues. Disordered stretches follow at residues Phe557–Gln806, Gln885–Pro916, Pro936–Lys959, Gly1176–Ser1249, Ala1332–His1648, and Gly1684–Ile1709. The span at Tyr592–Gln606 shows a compositional bias: low complexity. Over residues Asn644 to Gly655 the composition is skewed to gly residues. The segment covering Gln678–Ser695 has biased composition (polar residues). A compositionally biased stretch (low complexity) spans Ser713 to Gln771. Residues Tyr772–Ser784 are compositionally biased toward polar residues. The segment covering Ala893–Ser904 has biased composition (low complexity). Positions Gly1176 to Thr1197 are enriched in low complexity. Polar residues predominate over residues Ser1220–Tyr1231. The span at Ala1381–Pro1392 shows a compositional bias: low complexity. The segment covering Thr1430–Tyr1443 has biased composition (polar residues). The span at Ala1503–Ser1521 shows a compositional bias: low complexity. Composition is skewed to polar residues over residues Ala1554–Glu1565 and Phe1579–Arg1596. The span at Ser1608–Ala1633 shows a compositional bias: low complexity. Over residues Gly1684 to Ala1705 the composition is skewed to gly residues.

In terms of assembly, interacts with hfp; however, given the nuclear localization of hfp, the relevance of such interaction is unclear. Interacts with CycE, Cul1, and the SCF-proteasome complex. In terms of tissue distribution, expressed in all germline cells of the germarium including the stem cells and dividing cystocytes.

The protein localises to the cytoplasm. Functionally, required for the regulation of germline mitosis, karyosome formation, and establishment of dorsoventral (DS) polarity of the egg and embryo. Involved in proper grk mRNA localization and translation in the oocyte. May control germline mitosis by facilitating the cyclin E (CycE) proteolysis by the SCF-ubiquitin-proteasome complex. The chain is Protein encore (enc) from Drosophila melanogaster (Fruit fly).